A 338-amino-acid polypeptide reads, in one-letter code: Biotin synthase (338 aa).

Residues 46–270 enclose the Radical SAM core domain; it reads NEVQLSTLLS…VAVARITMPA (225 aa). Residues Cys-61, Cys-65, and Cys-68 each contribute to the [4Fe-4S] cluster site. [2Fe-2S] cluster contacts are provided by Cys-105, Cys-136, Cys-196, and Arg-274.

The protein belongs to the radical SAM superfamily. Biotin synthase family. In terms of assembly, homodimer. [4Fe-4S] cluster is required as a cofactor. Requires [2Fe-2S] cluster as cofactor.

The enzyme catalyses (4R,5S)-dethiobiotin + (sulfur carrier)-SH + 2 reduced [2Fe-2S]-[ferredoxin] + 2 S-adenosyl-L-methionine = (sulfur carrier)-H + biotin + 2 5'-deoxyadenosine + 2 L-methionine + 2 oxidized [2Fe-2S]-[ferredoxin]. It functions in the pathway cofactor biosynthesis; biotin biosynthesis; biotin from 7,8-diaminononanoate: step 2/2. Its function is as follows. Catalyzes the conversion of dethiobiotin (DTB) to biotin by the insertion of a sulfur atom into dethiobiotin via a radical-based mechanism. The protein is Biotin synthase of Rhizorhabdus wittichii (strain DSM 6014 / CCUG 31198 / JCM 15750 / NBRC 105917 / EY 4224 / RW1) (Sphingomonas wittichii).